Here is a 268-residue protein sequence, read N- to C-terminus: 1,4-dihydroxy-2-naphthoyl-CoA synthase (268 aa).

Residues 30 to 31 (VL), 70 to 74 (VGGDQ), 114 to 118 (YAVGG), Ser140, and Ser146 each bind substrate. A hydrogencarbonate-binding site is contributed by 139–141 (QSG).

This sequence belongs to the enoyl-CoA hydratase/isomerase family. MenB subfamily. Hydrogencarbonate is required as a cofactor.

It localises to the plastid. It is found in the chloroplast. It catalyses the reaction 2-succinylbenzoyl-CoA + H(+) = 1,4-dihydroxy-2-naphthoyl-CoA + H2O. Its pathway is quinol/quinone metabolism; 1,4-dihydroxy-2-naphthoate biosynthesis; 1,4-dihydroxy-2-naphthoate from chorismate: step 6/7. The protein operates within quinol/quinone metabolism; menaquinone biosynthesis. Its function is as follows. Converts o-succinylbenzoyl-CoA (OSB-CoA) to 1,4-dihydroxy-2-naphthoyl-CoA (DHNA-CoA). This Cyanidium caldarium (Red alga) protein is 1,4-dihydroxy-2-naphthoyl-CoA synthase (menB).